The primary structure comprises 413 residues: Alpha-1-antitrypsin-like protein CM55-SI (413 aa).

The N-terminal stretch at 1-24 (MPSSISWGLLLLAALSCLGPGSLA) is a signal peptide. Residue glutamine 25 is modified to Pyrrolidone carboxylic acid. N-linked (GlcNAc...) asparagine glycans are attached at residues asparagine 65, asparagine 102, asparagine 165, and asparagine 266. The interval 368 to 387 (GGTVLGNIRSILRYEVIFDR) is RCL.

This sequence belongs to the serpin family. Expressed in liver.

This Tamias sibiricus (Siberian chipmunk) protein is Alpha-1-antitrypsin-like protein CM55-SI.